Consider the following 182-residue polypeptide: Early nodulin-like protein 14 (182 aa).

An N-terminal signal peptide occupies residues 1–28 (MFLSASMASSSLHVAIFSLIFLFSLAAA). Residues 29-133 (NEVTVGGKSG…GQKLSLVVIS (105 aa)) enclose the Phytocyanin domain. Cysteine 87 and cysteine 121 form a disulfide bridge. 2 N-linked (GlcNAc...) asparagine glycosylation sites follow: asparagine 88 and asparagine 95. Residue serine 160 is the site of GPI-anchor amidated serine attachment. Positions 161–182 (GSVRLGGCYVVLGLVLGLCAWF) are cleaved as a propeptide — removed in mature form.

It belongs to the early nodulin-like (ENODL) family. Interacts strongly and specifically with the extracellular domain of FERONIA at the synergid cell surface. In terms of tissue distribution, mostly expressed in seedlings and flowers, and, to a lower extent, in roots, stems and seeds, but barely in leaves.

The protein localises to the cell membrane. Functionally, may act as a carbohydrate transporter. Required, together with ENODL11, ENODL12, ENODL13, ENODL14 and ENODL15, for male-female communication and pollen tube reception and burst at the synergid cell surface of the female gametophyte. This is Early nodulin-like protein 14 from Arabidopsis thaliana (Mouse-ear cress).